Reading from the N-terminus, the 37-residue chain is MVEPLLDGLVLGLVFATLGGLFYAAYQQYKRPNELGG.

Residues 5 to 25 (LLDGLVLGLVFATLGGLFYAA) traverse the membrane as a helical segment.

The protein belongs to the PetG family. As to quaternary structure, the 4 large subunits of the cytochrome b6-f complex are cytochrome b6, subunit IV (17 kDa polypeptide, PetD), cytochrome f and the Rieske protein, while the 4 small subunits are PetG, PetL, PetM and PetN. The complex functions as a dimer.

The protein resides in the cellular thylakoid membrane. In terms of biological role, component of the cytochrome b6-f complex, which mediates electron transfer between photosystem II (PSII) and photosystem I (PSI), cyclic electron flow around PSI, and state transitions. PetG is required for either the stability or assembly of the cytochrome b6-f complex. The polypeptide is Cytochrome b6-f complex subunit 5 (Mastigocladus laminosus (Fischerella sp.)).